Reading from the N-terminus, the 354-residue chain is DNA polymerase IV (354 aa).

A UmuC domain is found at isoleucine 14 to glycine 198. 2 residues coordinate Mg(2+): aspartate 18 and aspartate 116. Glutamate 117 is a catalytic residue.

It belongs to the DNA polymerase type-Y family. In terms of assembly, monomer. Requires Mg(2+) as cofactor.

The protein localises to the cytoplasm. It carries out the reaction DNA(n) + a 2'-deoxyribonucleoside 5'-triphosphate = DNA(n+1) + diphosphate. Functionally, poorly processive, error-prone DNA polymerase involved in untargeted mutagenesis. Copies undamaged DNA at stalled replication forks, which arise in vivo from mismatched or misaligned primer ends. These misaligned primers can be extended by PolIV. Exhibits no 3'-5' exonuclease (proofreading) activity. May be involved in translesional synthesis, in conjunction with the beta clamp from PolIII. The polypeptide is DNA polymerase IV (Streptococcus sanguinis (strain SK36)).